We begin with the raw amino-acid sequence, 394 residues long: Phosphoglycerate kinase (394 aa).

Residues 21 to 23, Arg-36, 59 to 62, Arg-118, and Arg-151 each bind substrate; these read DFN and HLGR. Position 183 is a phosphoserine (Ser-183). Lys-201 is a binding site for ATP. Phosphothreonine is present on Thr-299. ATP contacts are provided by residues Glu-323 and 350-353; that span reads GGDS.

Belongs to the phosphoglycerate kinase family. In terms of assembly, monomer.

It localises to the cytoplasm. The enzyme catalyses (2R)-3-phosphoglycerate + ATP = (2R)-3-phospho-glyceroyl phosphate + ADP. It participates in carbohydrate degradation; glycolysis; pyruvate from D-glyceraldehyde 3-phosphate: step 2/5. This is Phosphoglycerate kinase from Geobacillus kaustophilus (strain HTA426).